The chain runs to 225 residues: Dimerizing cyclase tstC (225 aa).

An N-terminal signal peptide occupies residues 1 to 19; that stretch reads MRLSTLSSLLLGSSSIVFA. 3 N-linked (GlcNAc...) asparagine glycosylation sites follow: N146, N195, and N217.

This sequence belongs to the dimerizing cyclase tstC family.

It carries out the reaction 2 [4-(deca-1,8-diyl)-2,5-dioxo-2,5-dihydro-3-furanyl]acetate + H(+) = 2-[(1R,8S,14R,15R)-11-hydroxy-14,15-bis[(6E)-oct-6-en-1-yl]-3,5,9-trioxo-4,10-dioxatetracyclo[9.4.0.0(2,6).0(8,12)]pentadeca-2(6),12-dien-8-yl]acetate + CO2. The protein operates within secondary metabolite biosynthesis. Its function is as follows. Dimerizing cyclase; part of the gene cluster that mediates the biosynthesis of the antihypercholesterolemic agents phomoidrides which are dimeric anhydrides. Within the pathway, tstC produces the bicyclo[4.3.1]deca-1,6-diene core of phomoidrides via the dimerization of the monomeric anhydrides leading to prephomoidride. The pathway begins with the highly reducing polyketide synthase tstA that catalyzes the formation of a C12-fatty acyl-ACP, starting from one acetate and 5 malonate units. The hydrolase tstM is involved in the release of the C12-fatty acyl chain from phiA. The alkylcitrate synthase (ACS) tstJ and the alkylcitrate dehydratase (ACDH) tstI then give rise to decarboxylated monomeric anhydrides by coupling the C12-fatty acyl chain with oxalacetic acid. The cyclase tstC is responsible for the dimerization of the monomeric anhydrides which leads to the production of prephomoidride that contains the characteristic bicyclo[4.3.1]deca-1,6-diene system of phomoidrides. Iterative oxidation catalyzed by the alpha-ketoglutarate-dependent dioxygenase tstK produced then phomoidride A. Finally, the methyltransferase tstE converts phomoidride A to phomoidride B via an acetalization reaction. The phosphatidylethanolamine-binding protein tstB and tstN are not essential for dimerization and their functions have still to be determined. This is Dimerizing cyclase tstC from Talaromyces stipitatus (strain ATCC 10500 / CBS 375.48 / QM 6759 / NRRL 1006) (Penicillium stipitatum).